A 446-amino-acid polypeptide reads, in one-letter code: Exodeoxyribonuclease 7 large subunit (446 aa).

It belongs to the XseA family. In terms of assembly, heterooligomer composed of large and small subunits.

Its subcellular location is the cytoplasm. It carries out the reaction Exonucleolytic cleavage in either 5'- to 3'- or 3'- to 5'-direction to yield nucleoside 5'-phosphates.. Its function is as follows. Bidirectionally degrades single-stranded DNA into large acid-insoluble oligonucleotides, which are then degraded further into small acid-soluble oligonucleotides. The sequence is that of Exodeoxyribonuclease 7 large subunit from Streptococcus pneumoniae serotype 19F (strain G54).